The chain runs to 565 residues: Formate--tetrahydrofolate ligase (565 aa).

Residue 65–72 (TPAGEGKT) coordinates ATP.

Belongs to the formate--tetrahydrofolate ligase family.

It catalyses the reaction (6S)-5,6,7,8-tetrahydrofolate + formate + ATP = (6R)-10-formyltetrahydrofolate + ADP + phosphate. Its pathway is one-carbon metabolism; tetrahydrofolate interconversion. In Syntrophus aciditrophicus (strain SB), this protein is Formate--tetrahydrofolate ligase.